The sequence spans 208 residues: UPF0637 protein BCG9842_B1177 (208 aa).

The protein belongs to the UPF0637 family.

The protein is UPF0637 protein BCG9842_B1177 of Bacillus cereus (strain G9842).